The sequence spans 143 residues: Transcriptional regulator MraZ (143 aa).

2 SpoVT-AbrB domains span residues 5–47 (TYAP…SQRE) and 76–119 (ASAE…DAEA).

The protein belongs to the MraZ family. As to quaternary structure, forms oligomers.

Its subcellular location is the cytoplasm. The protein localises to the nucleoid. The protein is Transcriptional regulator MraZ of Leifsonia xyli subsp. xyli (strain CTCB07).